The following is a 107-amino-acid chain: Putative antitoxin VapB5 (107 aa).

Transmembrane regions (helical) follow at residues 3 to 23 and 65 to 85; these read GPVIIPLISTLGLSFLAILLA and LIILTPALTWSLTALSMAYLY.

The protein resides in the cell membrane. Possibly the antitoxin component of a type II toxin-antitoxin (TA) system. Its cognate toxin is VapC5 (Potential). This Methanocaldococcus jannaschii (strain ATCC 43067 / DSM 2661 / JAL-1 / JCM 10045 / NBRC 100440) (Methanococcus jannaschii) protein is Putative antitoxin VapB5 (vapB5).